The chain runs to 269 residues: Ribosomal RNA small subunit methyltransferase J (269 aa).

S-adenosyl-L-methionine is bound by residues 125 to 126 and Asp179; that span reads ER.

It belongs to the methyltransferase superfamily. RsmJ family.

Its subcellular location is the cytoplasm. The catalysed reaction is guanosine(1516) in 16S rRNA + S-adenosyl-L-methionine = N(2)-methylguanosine(1516) in 16S rRNA + S-adenosyl-L-homocysteine + H(+). Specifically methylates the guanosine in position 1516 of 16S rRNA. This Pseudomonas syringae pv. tomato (strain ATCC BAA-871 / DC3000) protein is Ribosomal RNA small subunit methyltransferase J.